Here is a 738-residue protein sequence, read N- to C-terminus: Protostadienol synthase A (738 aa).

A PFTB 1 repeat occupies 132 to 173; the sequence is KQEMCRYLLNVVNEDGGWGLFIQSPSTVFGTVMNYCMLRILG. Asp463 serves as the catalytic Proton donor. PFTB repeat units follow at residues 490-531, 567-607, and 616-663; these read LQQA…YENV, VSRS…ACMG, and CQRA…AVIG.

The protein belongs to the terpene cyclase/mutase family.

It catalyses the reaction (S)-2,3-epoxysqualene = (17Z)-protosta-17(20),24-dien-3beta-ol. Functionally, protostadienol synthase which cyclizes (3S)-oxidosqualene to (17Z)-protosta-17(20),24-dien-3-beta-ol (protostadienol), the biosynthetic precursor of helvolic acid, a secondary metabolite which promotes virulence. The polypeptide is Protostadienol synthase A (pdsA) (Neosartorya fischeri (strain ATCC 1020 / DSM 3700 / CBS 544.65 / FGSC A1164 / JCM 1740 / NRRL 181 / WB 181) (Aspergillus fischerianus)).